The following is a 270-amino-acid chain: UPF0354 protein BC_4690 (270 aa).

Belongs to the UPF0354 family.

This Bacillus cereus (strain ATCC 14579 / DSM 31 / CCUG 7414 / JCM 2152 / NBRC 15305 / NCIMB 9373 / NCTC 2599 / NRRL B-3711) protein is UPF0354 protein BC_4690.